Reading from the N-terminus, the 101-residue chain is Small ribosomal subunit protein uS10 (101 aa).

It belongs to the universal ribosomal protein uS10 family. As to quaternary structure, part of the 30S ribosomal subunit.

Involved in the binding of tRNA to the ribosomes. This chain is Small ribosomal subunit protein uS10, found in Mycobacteroides abscessus (strain ATCC 19977 / DSM 44196 / CCUG 20993 / CIP 104536 / JCM 13569 / NCTC 13031 / TMC 1543 / L948) (Mycobacterium abscessus).